Reading from the N-terminus, the 61-residue chain is Large ribosomal subunit protein uL29 (61 aa).

The protein belongs to the universal ribosomal protein uL29 family.

The polypeptide is Large ribosomal subunit protein uL29 (Xanthomonas campestris pv. campestris (strain 8004)).